Here is a 213-residue protein sequence, read N- to C-terminus: Na(+)-translocating NADH-quinone reductase subunit D (213 aa).

Helical transmembrane passes span 21–41, 42–62, 77–97, 101–121, 131–151, and 183–203; these read PLIA…VKTA, ITMG…VSLL, IIIS…FFNI, LSVF…AESL, FLDG…VSII, and FGLM…IWVV.

Belongs to the NqrDE/RnfAE family. As to quaternary structure, composed of six subunits; NqrA, NqrB, NqrC, NqrD, NqrE and NqrF.

The protein localises to the cell inner membrane. The catalysed reaction is a ubiquinone + n Na(+)(in) + NADH + H(+) = a ubiquinol + n Na(+)(out) + NAD(+). Its function is as follows. NQR complex catalyzes the reduction of ubiquinone-1 to ubiquinol by two successive reactions, coupled with the transport of Na(+) ions from the cytoplasm to the periplasm. NqrA to NqrE are probably involved in the second step, the conversion of ubisemiquinone to ubiquinol. The sequence is that of Na(+)-translocating NADH-quinone reductase subunit D from Chlamydia felis (strain Fe/C-56) (Chlamydophila felis).